A 134-amino-acid chain; its full sequence is D-ribose pyranase (134 aa).

Catalysis depends on histidine 20, which acts as the Proton donor. Substrate contacts are provided by residues aspartate 28, histidine 99, and 123–125; that span reads FSN.

Belongs to the RbsD / FucU family. RbsD subfamily. In terms of assembly, homodecamer.

It is found in the cytoplasm. The catalysed reaction is beta-D-ribopyranose = beta-D-ribofuranose. It functions in the pathway carbohydrate metabolism; D-ribose degradation; D-ribose 5-phosphate from beta-D-ribopyranose: step 1/2. In terms of biological role, catalyzes the interconversion of beta-pyran and beta-furan forms of D-ribose. This Staphylococcus epidermidis (strain ATCC 12228 / FDA PCI 1200) protein is D-ribose pyranase.